The chain runs to 209 residues: FK506-binding protein 2B (209 aa).

The N-terminal stretch at 1–19 (MRFSLLALLGTIVATSVSA) is a signal peptide. A PPIase FKBP-type domain is found at 47–136 (GDELSMHYTG…VFEVELLEIK (90 aa)). Residues 157–177 (FTSPSFLVSTGIIVALFLIVF) form a helical membrane-spanning segment. A coiled-coil region spans residues 178-207 (KMAKKQDIAEANEKAAAATAEASTEKKEEK). Positions 190 to 209 (EKAAAATAEASTEKKEEKKE) are disordered. Residues 200–209 (STEKKEEKKE) are compositionally biased toward basic and acidic residues.

Belongs to the FKBP-type PPIase family. FKBP2 subfamily.

It is found in the membrane. It catalyses the reaction [protein]-peptidylproline (omega=180) = [protein]-peptidylproline (omega=0). Inhibited by both FK506 and rapamycin. Its function is as follows. PPIases accelerate the folding of proteins. It catalyzes the cis-trans isomerization of proline imidic peptide bonds in oligopeptides. The protein is FK506-binding protein 2B (FKBP3) of Rhizopus delemar (strain RA 99-880 / ATCC MYA-4621 / FGSC 9543 / NRRL 43880) (Mucormycosis agent).